The primary structure comprises 569 residues: MLO-like protein 10 (569 aa).

Over Met1–Thr41 the chain is Extracellular. A helical membrane pass occupies residues Trp42–Leu62. Residues His63 to Lys85 are Cytoplasmic-facing. The chain crosses the membrane as a helical span at residues Ala86 to Leu106. At Lys107–His163 the chain is on the extracellular side. The chain crosses the membrane as a helical span at residues Ile164–Gly184. Residues Arg185–Lys286 are Cytoplasmic-facing. Residues Val287 to Val307 form a helical membrane-spanning segment. Position 308 (Asn308) is a topological domain, extracellular. The chain crosses the membrane as a helical span at residues Gly309–Thr329. The Cytoplasmic segment spans residues Lys330 to His372. A helical transmembrane segment spans residues Leu373–Tyr393. The Extracellular segment spans residues Ser394 to Ser413. The helical transmembrane segment at Leu414–Thr434 threads the bilayer. Residues Gln435 to Asp569 lie on the Cytoplasmic side of the membrane. The interval Glu447 to Arg468 is calmodulin-binding.

This sequence belongs to the MLO family.

It localises to the membrane. May be involved in modulation of pathogen defense and leaf cell death. Activity seems to be regulated by Ca(2+)-dependent calmodulin binding and seems not to require heterotrimeric G proteins. In Arabidopsis thaliana (Mouse-ear cress), this protein is MLO-like protein 10 (MLO10).